The sequence spans 318 residues: MPNIVLFSGSSHQDLSQRVADRLGLELGKVVTKKFSNQETSVEIGESVRGEDVYIIQSGCGEINDNLMELLIMINACKIASSSRVTAVIPCFPYARQDKKDKSRAPISAKLVANMLSVAGADHIITMDLHASQIQGFFDIPVDNLYAEPAVLQWIRENITEWRNCIIVSPDAGGAKRVTSIADRLNVEFALIHKERKKANEVDRMVLVGDVKDRVAILVDDMADTCGTICHAADKLLSAGATKVYAILTHGIFSGPAISRINSAAFEAVVVTNTIPQEDKMKHCSKIQVIDISMILAEAIRRTHNGESVSYLFSHVPL.

96–101 (RQDKKD) serves as a coordination point for ATP. Residues Asp-128, His-130, Asp-139, and Asp-143 each coordinate Mg(2+). Residue His-130 coordinates ATP. The tract at residues 212–227 (KDRVAILVDDMADTCG) is binding of phosphoribosylpyrophosphate.

This sequence belongs to the ribose-phosphate pyrophosphokinase family. In terms of assembly, homodimer. The active form is probably a hexamer composed of 3 homodimers. The cofactor is Mg(2+).

The enzyme catalyses D-ribose 5-phosphate + ATP = 5-phospho-alpha-D-ribose 1-diphosphate + AMP + H(+). It functions in the pathway metabolic intermediate biosynthesis; 5-phospho-alpha-D-ribose 1-diphosphate biosynthesis; 5-phospho-alpha-D-ribose 1-diphosphate from D-ribose 5-phosphate (route I): step 1/1. With respect to regulation, activated by magnesium and inorganic phosphate. Competitively or non-competitively inhibited by ADP, 2,3-bisphosphoglyceride or GDP. In terms of biological role, catalyzes the synthesis of phosphoribosylpyrophosphate (PRPP) that is essential for nucleotide synthesis. This chain is Ribose-phosphate pyrophosphokinase 2 (Prps2), found in Mus musculus (Mouse).